Here is a 201-residue protein sequence, read N- to C-terminus: UPF0301 protein RHECIAT_CH0001061 (201 aa).

Belongs to the UPF0301 (AlgH) family.

This Rhizobium etli (strain CIAT 652) protein is UPF0301 protein RHECIAT_CH0001061.